The chain runs to 435 residues: Serine--tRNA ligase (435 aa).

Position 242–244 (242–244) interacts with L-serine; it reads TAE. 273–275 serves as a coordination point for ATP; sequence RSE. Residue Glu-296 coordinates L-serine. 360-363 contacts ATP; that stretch reads EISS. Residue Ser-396 participates in L-serine binding.

This sequence belongs to the class-II aminoacyl-tRNA synthetase family. Type-1 seryl-tRNA synthetase subfamily. Homodimer. The tRNA molecule binds across the dimer.

The protein resides in the cytoplasm. It catalyses the reaction tRNA(Ser) + L-serine + ATP = L-seryl-tRNA(Ser) + AMP + diphosphate + H(+). The catalysed reaction is tRNA(Sec) + L-serine + ATP = L-seryl-tRNA(Sec) + AMP + diphosphate + H(+). It participates in aminoacyl-tRNA biosynthesis; selenocysteinyl-tRNA(Sec) biosynthesis; L-seryl-tRNA(Sec) from L-serine and tRNA(Sec): step 1/1. In terms of biological role, catalyzes the attachment of serine to tRNA(Ser). Is also able to aminoacylate tRNA(Sec) with serine, to form the misacylated tRNA L-seryl-tRNA(Sec), which will be further converted into selenocysteinyl-tRNA(Sec). This is Serine--tRNA ligase from Vibrio atlanticus (strain LGP32) (Vibrio splendidus (strain Mel32)).